Consider the following 454-residue polypeptide: Pyrimidine/purine nucleotide 5'-monophosphate nucleosidase (454 aa).

The protein belongs to the LOG family.

The enzyme catalyses a pyrimidine ribonucleoside 5'-phosphate + H2O = a pyrimidine nucleobase + D-ribose 5-phosphate. It catalyses the reaction AMP + H2O = adenine + D-ribose 5-phosphate. The catalysed reaction is GMP + H2O = guanine + D-ribose 5-phosphate. It carries out the reaction CMP + H2O = cytosine + D-ribose 5-phosphate. The enzyme catalyses IMP + H2O = hypoxanthine + D-ribose 5-phosphate. It catalyses the reaction UMP + H2O = D-ribose 5-phosphate + uracil. The catalysed reaction is dTMP + H2O = 2-deoxy-D-ribose 5-phosphate + thymine. In terms of biological role, catalyzes the hydrolysis of the N-glycosidic bond of diverse pyrimidine and purine nucleotide 5'-monophosphates, to form ribose 5-phosphate and the corresponding free base. Can use AMP, GMP, IMP, CMP, dTMP and UMP as substrates. Cannot catalyze the reverse reactions. May contribute to nucleoside pool homeostasis by degrading excess nucleotides and feeding back the ribose moiety to catabolism. The chain is Pyrimidine/purine nucleotide 5'-monophosphate nucleosidase from Escherichia coli O157:H7.